The primary structure comprises 479 residues: MLWETIVEENNCSMDCNISNNTSSSSSINKMSGSRRARRSLELMSMDQEELSFYDDDVVPQDQQRSASPELMGLLSPEGSPQRFQIVRQPKILPAMGVSSDHTPARSFRIFNSLSSTCSMESSMDDEYMELFEMESQSQQTALGFPSGLNSLISGQIKEQPAAKSPAGLSMRRPSVRRCLSMTESNTNSTTTPPPKTPETARDCFKRPEPPASANCSPIQSKRHRCAAVEKENCPAPSPLSQVTISHPPPLRKCMSLNDAEIMSALARSENRNEPELIGDFSKAYALPLMEGRHRDLKSISSETVARLLKGEFSDKVASYRIIDCRYPYEFEGGHIEGAKNLYTTEQILDEFLTVQQTELQQQQNAESGHKRNIIIFHCEFSSERGPKMSRFLRNLDRERNTNAYPALHYPEIYLLHNGYKEFFESHVELCEPHAYRTMLDPAYNEAYRHFRAKSKSWNGDGLGGATGRLKKSRSRLML.

Residues 182 to 218 (MTESNTNSTTTPPPKTPETARDCFKRPEPPASANCSP) are disordered. Positions 199-209 (ETARDCFKRPE) are enriched in basic and acidic residues. Residues 316–432 (KVASYRIIDC…FFESHVELCE (117 aa)) form the Rhodanese domain. Cys-379 is an active-site residue. Ser-455 carries the phosphoserine modification.

The protein belongs to the MPI phosphatase family.

The catalysed reaction is O-phospho-L-tyrosyl-[protein] + H2O = L-tyrosyl-[protein] + phosphate. Its function is as follows. This protein functions as a dosage-dependent inducer in mitotic control. It is a tyrosine protein phosphatase required for progression of the cell cycle. It may directly dephosphorylate Cdk1 and activate the Cdk1 activity. This Drosophila melanogaster (Fruit fly) protein is M-phase inducer phosphatase (stg).